A 263-amino-acid chain; its full sequence is 3-deoxy-manno-octulosonate cytidylyltransferase (263 aa).

The protein belongs to the KdsB family.

Its subcellular location is the cytoplasm. The enzyme catalyses 3-deoxy-alpha-D-manno-oct-2-ulosonate + CTP = CMP-3-deoxy-beta-D-manno-octulosonate + diphosphate. The protein operates within nucleotide-sugar biosynthesis; CMP-3-deoxy-D-manno-octulosonate biosynthesis; CMP-3-deoxy-D-manno-octulosonate from 3-deoxy-D-manno-octulosonate and CTP: step 1/1. It participates in bacterial outer membrane biogenesis; lipopolysaccharide biosynthesis. In terms of biological role, activates KDO (a required 8-carbon sugar) for incorporation into bacterial lipopolysaccharide in Gram-negative bacteria. The polypeptide is 3-deoxy-manno-octulosonate cytidylyltransferase (Burkholderia cenocepacia (strain ATCC BAA-245 / DSM 16553 / LMG 16656 / NCTC 13227 / J2315 / CF5610) (Burkholderia cepacia (strain J2315))).